A 429-amino-acid polypeptide reads, in one-letter code: Phosphomethylpyrimidine synthase 1 (429 aa).

Substrate contacts are provided by residues Asn-65, Met-94, Tyr-123, His-162, 184-186 (SRG), 225-228 (DGLR), and Glu-264. His-268 is a Zn(2+) binding site. A substrate-binding site is contributed by Tyr-291. His-332 lines the Zn(2+) pocket. Residues Cys-408, Cys-411, and Cys-415 each coordinate [4Fe-4S] cluster.

This sequence belongs to the ThiC family. [4Fe-4S] cluster serves as cofactor.

The enzyme catalyses 5-amino-1-(5-phospho-beta-D-ribosyl)imidazole + S-adenosyl-L-methionine = 4-amino-2-methyl-5-(phosphooxymethyl)pyrimidine + CO + 5'-deoxyadenosine + formate + L-methionine + 3 H(+). The protein operates within cofactor biosynthesis; thiamine diphosphate biosynthesis. In terms of biological role, catalyzes the synthesis of the hydroxymethylpyrimidine phosphate (HMP-P) moiety of thiamine from aminoimidazole ribotide (AIR) in a radical S-adenosyl-L-methionine (SAM)-dependent reaction. The polypeptide is Phosphomethylpyrimidine synthase 1 (Methanosphaera stadtmanae (strain ATCC 43021 / DSM 3091 / JCM 11832 / MCB-3)).